Reading from the N-terminus, the 812-residue chain is Lon protease (812 aa).

Positions 22–215 (YAVLPLRDIV…KALSFMEAEI (194 aa)) constitute a Lon N-terminal domain. Position 367–374 (367–374 (GPPGVGKT)) interacts with ATP. The region spanning 602–783 (EDQVGVVTGL…GEVLKHALVR (182 aa)) is the Lon proteolytic domain. Catalysis depends on residues Ser-689 and Lys-732. The segment at 787–812 (PIEWTEQENPTAVPPVEDEAGASLAH) is disordered.

Belongs to the peptidase S16 family. As to quaternary structure, homohexamer. Organized in a ring with a central cavity.

Its subcellular location is the cytoplasm. It carries out the reaction Hydrolysis of proteins in presence of ATP.. In terms of biological role, ATP-dependent serine protease that mediates the selective degradation of mutant and abnormal proteins as well as certain short-lived regulatory proteins. Required for cellular homeostasis and for survival from DNA damage and developmental changes induced by stress. Degrades polypeptides processively to yield small peptide fragments that are 5 to 10 amino acids long. Binds to DNA in a double-stranded, site-specific manner. Required for wild-type virulence during the initial stages of infection in the mouse model, but not essential for the establishment and maintenance of chronic infection in this host. The polypeptide is Lon protease (Brucella abortus (strain 2308)).